The chain runs to 270 residues: MGKSSKDKRDIYYRKAKEEGWRARSAFKLIQIDEEYQIFEGVKRVVDLCAAPGSWSQVLSRRIYGDGKDPDVKIVAVDLQEMAPLKGVVQIKGDITKYETSKQIISHFDGSLADLIISDGAPDVTGLHDIDFYGQSQLILSALNITTHTLKIGGTFVAKMFKGDDMSLMYSQMKLFFEHVSFVKPSSSRESSLENFILCRNYQPPLNYNPKIIDPALENHNKILNNNNNNSNNNNNCNIDNENDNEFLKTDSLIVPFIACGDLNLGYHLV.

Glycine 53, tryptophan 55, aspartate 78, aspartate 94, and aspartate 119 together coordinate S-adenosyl-L-methionine. The active-site Proton acceptor is the lysine 159.

The protein belongs to the class I-like SAM-binding methyltransferase superfamily. RNA methyltransferase RlmE family. TRM7 subfamily.

It localises to the cytoplasm. It carries out the reaction cytidine(32)/guanosine(34) in tRNA + 2 S-adenosyl-L-methionine = 2'-O-methylcytidine(32)/2'-O-methylguanosine(34) in tRNA + 2 S-adenosyl-L-homocysteine + 2 H(+). Methylates the 2'-O-ribose of nucleotides at positions 32 and 34 of the tRNA anticodon loop of substrate tRNAs. The sequence is that of Putative tRNA (cytidine(32)/guanosine(34)-2'-O)-methyltransferase (fsjA) from Dictyostelium discoideum (Social amoeba).